The sequence spans 97 residues: Large ribosomal subunit protein bL28 (97 aa).

Belongs to the bacterial ribosomal protein bL28 family.

This Rickettsia felis (strain ATCC VR-1525 / URRWXCal2) (Rickettsia azadi) protein is Large ribosomal subunit protein bL28.